The chain runs to 393 residues: 4-O-methyl-glucuronoyl methylesterase (393 aa).

The signal sequence occupies residues 1-19 (MKLSAALLAIAAFANVASA). Gln20 bears the Pyrrolidone carboxylic acid mark. An intrachain disulfide couples Cys22 to Cys56. 2 N-linked (GlcNAc...) asparagine glycosylation sites follow: Asn103 and Asn168. A GXSYXG catalytic site motif motif is present at residues 203 to 208 (GCSRNG). Disulfide bonds link Cys204–Cys340 and Cys236–Cys312. Ser205 (nucleophile) is an active-site residue. Residues Lys209, Gln251, Glu259, and Trp303 each coordinate substrate. His339 functions as the Proton donor/acceptor in the catalytic mechanism.

Belongs to the carbohydrate esterase 15 (CE15) family.

The protein resides in the secreted. It catalyses the reaction a 4-O-methyl-alpha-D-glucuronosyl ester derivative + H2O = 4-O-methyl-alpha-D-glucuronate derivative + an alcohol + H(+). Functionally, glucuronoyl esterase which may play a significant role in biomass degradation, as it is considered to disconnect hemicellulose from lignin through the hydrolysis of the ester bond between 4-O-methyl-D-glucuronic acid residues of glucuronoxylans and aromatic alcohols of lignin. This chain is 4-O-methyl-glucuronoyl methylesterase, found in Schizophyllum commune (strain H4-8 / FGSC 9210) (Split gill fungus).